We begin with the raw amino-acid sequence, 212 residues long: uncharacterized protein (212 aa).

The protein belongs to the IIV-6 309L family.

This is an uncharacterized protein from Aedes vexans (Inland floodwater mosquito).